The chain runs to 26 residues: Probable early E4 17 kDa protein (26 aa).

This is Probable early E4 17 kDa protein from Homo sapiens (Human).